The following is a 281-amino-acid chain: Probable protein phosphatase 2C 9 (281 aa).

The region spanning lysine 33–phenylalanine 280 is the PPM-type phosphatase domain. Residues aspartate 70, glycine 71, aspartate 232, and aspartate 271 each contribute to the Mn(2+) site.

This sequence belongs to the PP2C family. Interacts with phytochromes (via N-terminus). Mg(2+) serves as cofactor. The cofactor is Mn(2+).

The protein localises to the nucleus. The enzyme catalyses O-phospho-L-seryl-[protein] + H2O = L-seryl-[protein] + phosphate. It catalyses the reaction O-phospho-L-threonyl-[protein] + H2O = L-threonyl-[protein] + phosphate. Involved in the regulation of phytochrome signaling. May regulate phytochrome-interacting factor 3 (PIF3) through the dephosphorylation of phytochrome. The protein is Probable protein phosphatase 2C 9 of Arabidopsis thaliana (Mouse-ear cress).